A 258-amino-acid chain; its full sequence is MLEQILATKREEVETLTLPAPLPERKRRPFAAALRRPRRMLGLIAEVKKASPSKGIIRPDFDPVAIAKAYERAGADAISVLTDERYFQGHRRYLRAVKEAVNVPVLRKDFIIDRRQVEESVRLGADAILLIGEALPPETLEELYHEAYSLGLECLVEVHAKETLERIFDRFTPEIVGINNRDLHTFVTTLEATKTLAPLIPPSCVIVSESGIGSFNDVKTVKSYGAQAMLVGESLMRQDDVERAVYRLFGEEDGDDSN.

It belongs to the TrpC family.

The catalysed reaction is 1-(2-carboxyphenylamino)-1-deoxy-D-ribulose 5-phosphate + H(+) = (1S,2R)-1-C-(indol-3-yl)glycerol 3-phosphate + CO2 + H2O. It functions in the pathway amino-acid biosynthesis; L-tryptophan biosynthesis; L-tryptophan from chorismate: step 4/5. This Geobacillus kaustophilus (strain HTA426) protein is Indole-3-glycerol phosphate synthase.